A 346-amino-acid polypeptide reads, in one-letter code: UDP-N-acetylenolpyruvoylglucosamine reductase (346 aa).

Positions 18–189 constitute an FAD-binding PCMH-type domain; the sequence is LRAQARAFIA…VSVVFALKTH (172 aa). Residue arginine 165 is part of the active site. Serine 240 functions as the Proton donor in the catalytic mechanism. The active site involves glutamate 336.

This sequence belongs to the MurB family. Requires FAD as cofactor.

The protein resides in the cytoplasm. It catalyses the reaction UDP-N-acetyl-alpha-D-muramate + NADP(+) = UDP-N-acetyl-3-O-(1-carboxyvinyl)-alpha-D-glucosamine + NADPH + H(+). It functions in the pathway cell wall biogenesis; peptidoglycan biosynthesis. Cell wall formation. This is UDP-N-acetylenolpyruvoylglucosamine reductase from Neisseria meningitidis serogroup C (strain 053442).